We begin with the raw amino-acid sequence, 394 residues long: Elongation factor Tu (394 aa).

A tr-type G domain is found at 10–204 (KPHVNIGTIG…AVDSYIPQPV (195 aa)). Residues 19-26 (GHVDHGKT) are G1. GTP is bound at residue 19-26 (GHVDHGKT). Thr-26 serves as a coordination point for Mg(2+). A G2 region spans residues 60–64 (GITIS). A G3 region spans residues 81–84 (DCPG). GTP contacts are provided by residues 81-85 (DCPGH) and 136-139 (NKID). Residues 136–139 (NKID) form a G4 region. Residues 174 to 176 (SAL) form a G5 region.

The protein belongs to the TRAFAC class translation factor GTPase superfamily. Classic translation factor GTPase family. EF-Tu/EF-1A subfamily. In terms of assembly, monomer.

It localises to the cytoplasm. The catalysed reaction is GTP + H2O = GDP + phosphate + H(+). GTP hydrolase that promotes the GTP-dependent binding of aminoacyl-tRNA to the A-site of ribosomes during protein biosynthesis. The polypeptide is Elongation factor Tu (Rickettsia rickettsii).